Here is a 902-residue protein sequence, read N- to C-terminus: Androgen receptor (902 aa).

The segment at 1–540 (MEVQLGLGRV…PIDYYFPPQK (540 aa)) is modulating. The interval 1–569 (MEVQLGLGRV…GSCKVFFKRA (569 aa)) is interaction with ZNF318. Disordered stretches follow at residues 35–146 (QNPG…LSLL) and 194–224 (QQEV…YLGG). Ser-61 carries the phosphoserine; by CDK9 modification. Ser-75 is subject to Phosphoserine. Residues 94-103 (QPSQQQSASE) show a composition bias toward low complexity. Polar residues-rich tracts occupy residues 196 to 205 (EVISEGSSSV) and 213 to 224 (APSSSKDSYLGG). Residue Tyr-221 is modified to Phosphotyrosine; by CSK. Ser-254 bears the Phosphoserine mark. A Phosphotyrosine; by CSK and TNK2 modification is found at Tyr-265. The residue at position 290 (Ser-290) is a Phosphoserine. 4 positions are modified to phosphotyrosine; by CSK: Tyr-305, Tyr-344, Tyr-355, and Tyr-360. Tyr-361 carries the post-translational modification Phosphotyrosine; by CSK and TNK2. Lys-384 participates in a covalent cross-link: Glycyl lysine isopeptide (Lys-Gly) (interchain with G-Cter in SUMO). Tyr-391 is modified (phosphotyrosine; by CSK). The disordered stretch occupies residues 439–465 (EGQLYGPGGGGGSSSPSDAGPVAPYGY). Lys-503 participates in a covalent cross-link: Glycyl lysine isopeptide (Lys-Gly) (interchain with G-Cter in SUMO). Tyr-517 and Tyr-534 each carry phosphotyrosine; by CSK. Positions 534 to 901 (YYFPPQKTCL…GKVKPIYFHT (368 aa)) are interaction with LPXN. Positions 541–614 (TCLICGDEAS…AGMTLGARKL (74 aa)) form a DNA-binding region, nuclear receptor. NR C4-type zinc fingers lie at residues 542–562 (CLIC…CGSC) and 578–602 (CASR…LRKC). Residues 554-644 (YGALTCGSCK…TEDPSQKMTV (91 aa)) form an interaction with HIPK3 region. Residues 574 to 901 (QKYLCASRND…GKVKPIYFHT (328 aa)) form an interaction with CCAR1 region. The tract at residues 607 to 901 (MTLGARKLKK…GKVKPIYFHT (295 aa)) is interaction with KAT7. Ser-633 carries the post-translational modification Phosphoserine. The region spanning 651–882 (ECQPIFLNVL…DFPEMMAEII (232 aa)) is the NR LBD domain. 17beta-hydroxy-5alpha-androstan-3-one is bound by residues Asn-688 and Arg-735. Residues Lys-828 and Lys-830 each participate in a glycyl lysine isopeptide (Lys-Gly) (interchain with G-Cter in ubiquitin) cross-link. 17beta-hydroxy-5alpha-androstan-3-one is bound at residue Thr-860. Tyr-898 bears the Phosphotyrosine; by CSK mark.

This sequence belongs to the nuclear hormone receptor family. NR3 subfamily. As to quaternary structure, binds DNA as a homodimer. Part of a ternary complex containing AR, EFCAB6/DJBP and PARK7. Interacts with HIPK3 and NR0B2 in the presence of androgen. The ligand binding domain interacts with KAT7/HBO1 in the presence of dihydrotestosterone. Interacts with EFCAB6/DJBP, PQBP1, RANBP9, RBAK, SPDEF, SRA1, TGFB1I1, ZNF318 and RREB1. Interacts with ZMIZ1/ZIMP10 and ZMIZ2/ZMIP7 which both enhance its transactivation activity. Interacts with SLC30A9 and RAD54L2/ARIP4. Interacts with MACROD1 (via macro domain). Interacts via the ligand-binding domain with LXXLL and FXXLF motifs from NCOA1, NCOA2, NCOA3 and MAGEA11. Interacts (via nuclear receptor DNA binding domain and nuclear receptor ligand binding domain) with NCOA4. The AR N-terminal poly-Gln region binds Ran resulting in enhancement of AR-mediated transactivation. Ran-binding decreases as the poly-Gln length increases. Interacts with HIP1 (via coiled coil domain). Interacts (via ligand-binding domain) with TRIM68. Interacts with TNK2. Interacts with USP26. Interacts with RNF6. Interacts (regulated by RNF6 probably through polyubiquitination) with RNF14; regulates AR transcriptional activity. Interacts with PRMT2 and TRIM24. Interacts with RACK1. Interacts with RANBP10; this interaction enhances dihydrotestosterone-induced AR transcriptional activity. Interacts with PRPF6 in a hormone-independent way; this interaction enhances dihydrotestosterone-induced AR transcriptional activity. Interacts with STK4/MST1. Interacts with ZIPK/DAPK3. Interacts with LPXN. Interacts with MAK. Part of a complex containing AR, MAK and NCOA3. Interacts with CRY1. Interacts with CCAR1 and GATA2. Interacts with BUD31. Interacts with ARID4A. Interacts with ARID4B. Interacts (via NR LBD domain) with ZBTB7A; the interaction is direct and androgen-dependent. Interacts with NCOR1. Interacts with NCOR2. Interacts with CRY2 in a ligand-dependent manner. Post-translationally, phosphorylated in prostate cancer cells in response to several growth factors including EGF. Phosphorylation is induced by c-Src kinase (CSK). Tyr-517 is one of the major phosphorylation sites and an increase in phosphorylation and Src kinase activity is associated with prostate cancer progression. Phosphorylation by TNK2 enhances the DNA-binding and transcriptional activity. Phosphorylation at Ser-61 by CDK9 regulates AR promoter selectivity and cell growth. Phosphorylation by PAK6 leads to AR-mediated transcription inhibition. Sumoylated on Lys-384 (major) and Lys-503. Ubiquitinated. Deubiquitinated by USP26. 'Lys-6' and 'Lys-27'-linked polyubiquitination by RNF6 modulates AR transcriptional activity and specificity. In terms of processing, palmitoylated by ZDHHC7 and ZDHHC21. Palmitoylation is required for plasma membrane targeting and for rapid intracellular signaling via ERK and AKT kinases and cAMP generation. As to expression, highest levels in the seminal vesicle, ventral prostate and coagulating gland with lower levels in the kidney and levator ani muscle.

It is found in the nucleus. It localises to the cytoplasm. Functionally, steroid hormone receptors are ligand-activated transcription factors that regulate eukaryotic gene expression and affect cellular proliferation and differentiation in target tissues. Transcription factor activity is modulated by bound coactivator and corepressor proteins like ZBTB7A that recruits NCOR1 and NCOR2 to the androgen response elements/ARE on target genes, negatively regulating androgen receptor signaling and androgen-induced cell proliferation. Transcription activation is also down-regulated by NR0B2. Activated, but not phosphorylated, by HIPK3 and ZIPK/DAPK3. In Rattus norvegicus (Rat), this protein is Androgen receptor (Ar).